Here is a 95-residue protein sequence, read N- to C-terminus: FXYD domain-containing ion transport regulator 6 (95 aa).

The N-terminal stretch at 1-18 is a signal peptide; that stretch reads MEVVLLFLCGLLAPAVLA. Residues 19–35 are Extracellular-facing; that stretch reads SATEQEKEKDPFHYDYQ. The chain crosses the membrane as a helical span at residues 36-58; it reads TLRIGGLVFAVVLFSVGILLILS. At 59–95 the chain is on the cytoplasmic side; that stretch reads RRCKCSFNQKPRAPGDEEAQVENLVTANATEPQKAEN. The interval 69–95 is disordered; the sequence is PRAPGDEEAQVENLVTANATEPQKAEN.

Belongs to the FXYD family. As to quaternary structure, regulatory subunit of the sodium/potassium-transporting ATPase which is composed of a catalytic alpha subunit, a non-catalytic beta subunit and an additional regulatory subunit. The regulatory subunit, a member of the FXYD protein family, modulates the enzymatic activity in a tissue- and isoform-specific way by changing affinities of the Na+/K+-ATPase toward Na(+), K(+) or ATP.

It is found in the cell membrane. Functionally, associates with and regulates the activity of the sodium/potassium-transporting ATPase (NKA) which catalyzes the hydrolysis of ATP coupled with the exchange of Na(+) and K(+) ions across the plasma membrane. Reduces the apparent affinity for intracellular Na(+) with no change in the apparent affinity for extracellular K(+). In addition to modulating NKA kinetics, may also function as a regulator of NKA localization to the plasma membrane. In Bos taurus (Bovine), this protein is FXYD domain-containing ion transport regulator 6 (FXYD6).